The following is a 161-amino-acid chain: Nucleotide-binding protein Glov_3198 (161 aa).

Belongs to the YajQ family.

Functionally, nucleotide-binding protein. The polypeptide is Nucleotide-binding protein Glov_3198 (Trichlorobacter lovleyi (strain ATCC BAA-1151 / DSM 17278 / SZ) (Geobacter lovleyi)).